Here is a 166-residue protein sequence, read N- to C-terminus: NADPH-dependent 7-cyano-7-deazaguanine reductase (166 aa).

The active-site Thioimide intermediate is C57. Residue D64 is the Proton donor of the active site. Substrate-binding positions include 79-81 and 98-99; these read VES and HE.

The protein belongs to the GTP cyclohydrolase I family. QueF type 1 subfamily.

It is found in the cytoplasm. The enzyme catalyses 7-aminomethyl-7-carbaguanine + 2 NADP(+) = 7-cyano-7-deazaguanine + 2 NADPH + 3 H(+). It functions in the pathway tRNA modification; tRNA-queuosine biosynthesis. Catalyzes the NADPH-dependent reduction of 7-cyano-7-deazaguanine (preQ0) to 7-aminomethyl-7-deazaguanine (preQ1). The polypeptide is NADPH-dependent 7-cyano-7-deazaguanine reductase (Staphylococcus saprophyticus subsp. saprophyticus (strain ATCC 15305 / DSM 20229 / NCIMB 8711 / NCTC 7292 / S-41)).